A 955-amino-acid polypeptide reads, in one-letter code: Isoleucine--tRNA ligase (955 aa).

The short motif at 60-70 (PYANGDLHIGH) is the 'HIGH' region element. Glu563 serves as a coordination point for L-isoleucyl-5'-AMP. Residues 604-608 (KMSKS) carry the 'KMSKS' region motif. Position 607 (Lys607) interacts with ATP. The Zn(2+) site is built by Cys926, Cys929, Cys946, and Cys949.

It belongs to the class-I aminoacyl-tRNA synthetase family. IleS type 1 subfamily. As to quaternary structure, monomer. It depends on Zn(2+) as a cofactor.

It localises to the cytoplasm. It carries out the reaction tRNA(Ile) + L-isoleucine + ATP = L-isoleucyl-tRNA(Ile) + AMP + diphosphate. Its function is as follows. Catalyzes the attachment of isoleucine to tRNA(Ile). As IleRS can inadvertently accommodate and process structurally similar amino acids such as valine, to avoid such errors it has two additional distinct tRNA(Ile)-dependent editing activities. One activity is designated as 'pretransfer' editing and involves the hydrolysis of activated Val-AMP. The other activity is designated 'posttransfer' editing and involves deacylation of mischarged Val-tRNA(Ile). The polypeptide is Isoleucine--tRNA ligase (Cyanothece sp. (strain PCC 7425 / ATCC 29141)).